Here is a 413-residue protein sequence, read N- to C-terminus: O-methyltransferase kntB (413 aa).

Residues 255-256 (GG), Asp280, 302-303 (NF), and Arg319 each bind S-adenosyl-L-methionine. The active-site Proton acceptor is His322.

Belongs to the class I-like SAM-binding methyltransferase superfamily. Cation-independent O-methyltransferase family. It depends on S-adenosyl-L-methionine as a cofactor.

Its pathway is secondary metabolite biosynthesis. Functionally, non-reducing polyketide synthase; part of the gene cluster that mediates the biosynthesis of the bicoumarin kotanin. The non-reducing polyketide synthase ktnS first catalyzes the formation of the pentaketidic 4,7-dihydroxy-5-methylcoumarin from acetyl coenzyme A and 4 malonyl coenzyme A molecules. Further O-methylation by ktnB leads to the formation of 7-demethylsiderin. Then, an oxidative phenol coupling catalyzed by the cytochrome P450 monooxygenase ktnC forms the 8,8'-dimer P-orlandin via dimerization the monomeric precursor, 7-demethylsiderin. P-orlandin is subsequently O-methylated in a stepwise fashion to demethylkotanin and kotanin. This chain is O-methyltransferase kntB, found in Aspergillus niger (strain ATCC MYA-4892 / CBS 513.88 / FGSC A1513).